Reading from the N-terminus, the 546-residue chain is Fusion glycoprotein F0 (546 aa).

The N-terminal stretch at 1–26 (MATQEVRLKCLLCGIIVLVLSLEGLG) is a signal peptide. Over 27–494 (ILHYEKLSKI…NPSLISMLSM (468 aa)) the chain is Extracellular. N-linked (GlcNAc...) asparagine; by host glycosylation is found at asparagine 64, asparagine 67, and asparagine 99. Residues 110–134 (LAGVVMAGIAIGIATAAQITAGVAL) form a fusion peptide region. Positions 135–163 (YEAMKNADNINKLKSSIESTNEAVVKLQE) form a coiled coil. 4 disulfide bridges follow: cysteine 331–cysteine 340, cysteine 355–cysteine 363, cysteine 387–cysteine 392, and cysteine 394–cysteine 417. Asparagine 414 and asparagine 464 each carry an N-linked (GlcNAc...) asparagine; by host glycan. Residues 459–484 (QISSMNQSLQQSKDYIKEAQKILDTV) are a coiled coil. The chain crosses the membrane as a helical span at residues 495–515 (IILYVLSIAALCIGLITFISF). Residues 516-546 (VIVEKKRGNYSRLDDRQVRPVSNGDLYYIGT) lie on the Cytoplasmic side of the membrane.

This sequence belongs to the paramyxoviruses fusion glycoprotein family. As to quaternary structure, homotrimer of disulfide-linked F1-F2. The inactive precursor F0 is glycosylated and proteolytically cleaved into F1 and F2 to be functionally active. The cleavage is mediated by cellular proteases during the transport and maturation of the polypeptide.

It is found in the virion membrane. The protein localises to the host cell membrane. Functionally, class I viral fusion protein. Under the current model, the protein has at least 3 conformational states: pre-fusion native state, pre-hairpin intermediate state, and post-fusion hairpin state. During viral and plasma cell membrane fusion, the heptad repeat (HR) regions assume a trimer-of-hairpins structure, positioning the fusion peptide in close proximity to the C-terminal region of the ectodomain. The formation of this structure appears to drive apposition and subsequent fusion of viral and plasma cell membranes. Directs fusion of viral and cellular membranes leading to delivery of the nucleocapsid into the cytoplasm. This fusion is pH independent and occurs directly at the outer cell membrane. The trimer of F1-F2 (F protein) probably interacts with G at the virion surface. Upon G binding to its cellular receptor, the hydrophobic fusion peptide is unmasked and interacts with the cellular membrane, inducing the fusion between cell and virion membranes. Later in infection, F proteins expressed at the plasma membrane of infected cells could mediate fusion with adjacent cells to form syncytia, a cytopathic effect that could lead to tissue necrosis. This Hendra virus (isolate Horse/Autralia/Hendra/1994) protein is Fusion glycoprotein F0 (F).